Consider the following 140-residue polypeptide: Nucleoside diphosphate kinase (140 aa).

Positions 11, 59, 87, 93, 104, and 114 each coordinate ATP. Histidine 117 (pros-phosphohistidine intermediate) is an active-site residue.

This sequence belongs to the NDK family. Homotetramer. Requires Mg(2+) as cofactor.

It is found in the cytoplasm. The enzyme catalyses a 2'-deoxyribonucleoside 5'-diphosphate + ATP = a 2'-deoxyribonucleoside 5'-triphosphate + ADP. It carries out the reaction a ribonucleoside 5'-diphosphate + ATP = a ribonucleoside 5'-triphosphate + ADP. Major role in the synthesis of nucleoside triphosphates other than ATP. The ATP gamma phosphate is transferred to the NDP beta phosphate via a ping-pong mechanism, using a phosphorylated active-site intermediate. The polypeptide is Nucleoside diphosphate kinase (Rickettsia felis (strain ATCC VR-1525 / URRWXCal2) (Rickettsia azadi)).